The primary structure comprises 309 residues: Minor serine/threonine-protein phosphatase PP2A-1 catalytic subunit (309 aa).

Residues Asp57, His59, Asp85, and Asn117 each coordinate Mn(2+). The active-site Proton donor is His118. The Mn(2+) site is built by His167 and His241. The residue at position 309 (Leu309) is a Leucine methyl ester.

This sequence belongs to the PPP phosphatase family. PP-2A subfamily. Mn(2+) serves as cofactor.

The enzyme catalyses O-phospho-L-seryl-[protein] + H2O = L-seryl-[protein] + phosphate. The catalysed reaction is O-phospho-L-threonyl-[protein] + H2O = L-threonyl-[protein] + phosphate. Functionally, essential role in cell cycle control. PP2A may be involved in controlling the entry into mitosis, possibly acting as an inhibitor. This chain is Minor serine/threonine-protein phosphatase PP2A-1 catalytic subunit (ppa1), found in Schizosaccharomyces pombe (strain 972 / ATCC 24843) (Fission yeast).